Here is a 118-residue protein sequence, read N- to C-terminus: T cell receptor gamma variable 2 (118 aa).

The N-terminal stretch at 1-17 (MQWALAVLLAFLSPASQ) is a signal peptide. The 101-residue stretch at 18–118 (KSSNLEGRTK…GVYYCATWDG (101 aa)) folds into the Ig-like domain. The cysteines at positions 41 and 113 are disulfide-linked.

As to quaternary structure, gamma-delta TR is a heterodimer composed of a gamma and delta chain; disulfide-linked. The gamma-delta TR is associated with the transmembrane signaling CD3 coreceptor proteins following the stoichiometry: a single gamma-delta TR heterodimer associates with one CD3D-CD3E heterodimer, one CD3G-CD3E heterodimer and one CD247 homodimer forming a stable octameric structure. Upon activation, gamma-delta TR complex associates with FCER1G to initiate intracellular signaling.

It localises to the cell membrane. Functionally, v region of the variable domain of T cell receptor (TR) gamma chain that participates in the antigen recognition. Gamma-delta TRs recognize a variety of self and foreign non-peptide antigens frequently expressed at the epithelial boundaries between the host and external environment, including endogenous lipids presented by MH-like protein CD1D and phosphoantigens presented by butyrophilin-like molecule BTN3A1. Upon antigen recognition induces rapid, innate-like immune responses involved in pathogen clearance and tissue repair. Binding of gamma-delta TR complex to antigen triggers phosphorylation of immunoreceptor tyrosine-based activation motifs (ITAMs) in the CD3 chains by the LCK and FYN kinases, allowing the recruitment, phosphorylation, and activation of ZAP70 that facilitates phosphorylation of the scaffolding proteins LCP2 and LAT. This lead to the formation of a supramolecular signalosome that recruits the phospholipase PLCG1, resulting in calcium mobilization and ERK activation, ultimately leading to T cell expansion and differentiation into effector cells. Gamma-delta TRs are produced through somatic rearrangement of a limited repertoire of variable (V), diversity (D), and joining (J) genes. The potential diversity of gamma-delta TRs is conferred by the unique ability to rearrange (D) genes in tandem and to utilize all three reading frames. The combinatorial diversity is considerably increased by the sequence exonuclease trimming and random nucleotide (N) region additions which occur during the V-(D)-J rearrangements. This is T cell receptor gamma variable 2 from Homo sapiens (Human).